Reading from the N-terminus, the 613-residue chain is Probable indole-3-acetic acid-amido synthetase GH3.12 (613 aa).

This sequence belongs to the IAA-amido conjugating enzyme family. As to expression, expressed in roots.

May catalyze the synthesis of indole-3-acetic acid (IAA)-amino acid conjugates, providing a mechanism for the plant to cope with the presence of excess auxin. This chain is Probable indole-3-acetic acid-amido synthetase GH3.12 (GH3.12), found in Oryza sativa subsp. japonica (Rice).